A 434-amino-acid chain; its full sequence is MNNKDDLFIQKILITGGAGFIGSHLAIYLTKKFKNSKIIVLDKLDYCSNINNLGCVLKELNFKFYKGNILDSELLENIFEKEKIDIVIHLAAYTHVDNSFKQSIKFTENNILGTHYLLETCKNYKLKKFIYVSTDEVYGSGLIEDNDDNNNSINQSSNEKSILNPTNPYSASKAGAEHLVQSYYKSFKLPVIITRANNIYGPKQYPEKIIPKFINLLLNNKKCTIHGTGKNTRNYLYIDDIVSAFDIILRKGEIGNVYNIGTDFEISNLDVAKKIINISINLNNNNNNNNNNNNNNNNNNNNNNNNNNNDFNIMDYKKFINYIDDRPFNDHRYNINYSKLSNLGWKKSISWEEGIEKTFIWYKNNRNYWLNLNVDSYENINNDNNFKYFGNQNNNNENNNNDNNENNNNCRVCSNIDLNYGEKKPFHLTLKSEE.

Thr134 is a binding site for substrate. Catalysis depends on Asp135, which acts as the Proton donor. Residues Glu136 and Tyr169 each act as proton acceptor in the active site. Low complexity predominate over residues 286–309 (NNNNNNNNNNNNNNNNNNNNNNNN). A disordered region spans residues 286 to 310 (NNNNNNNNNNNNNNNNNNNNNNNND).

It belongs to the NAD(P)-dependent epimerase/dehydratase family. dTDP-glucose dehydratase subfamily. It depends on NAD(+) as a cofactor.

The enzyme catalyses dTDP-alpha-D-glucose = dTDP-4-dehydro-6-deoxy-alpha-D-glucose + H2O. The polypeptide is dTDP-D-glucose 4,6-dehydratase (tgds) (Dictyostelium discoideum (Social amoeba)).